Here is a 370-residue protein sequence, read N- to C-terminus: MTEKSWFETIFCCCCHRTPIIRREIKLGCFGIGSAGKTTFLKVLKGEDPRDLLRTNGFSTVKMEYDETFHLTIYDVGGDKGIRGIWSNYYAEVHGIIYVIDYSTDETFTESIEALHSLTSNPHVQKKPIFLLLNNQNNREFDDVEISNETKIQAGQHKIVLFSHFNKYNGYLDNIKSATLTVMARAKKDRNEYQEQFVRFIDSISEHYVELSEGVKTAELALRIRQEEAKEQRRLMQMKVEHDALKADVAGLELRNQPPVQPPIPPDPPSDPKSASVHIEESPPMSLASSTIPSDIIQSTPETGTPRDPVNFCRISQTSTKPVSPESNSVKEEPTIILKDNYFLPPKAPGRQYSRIQRIQNVLNNRVVPK.

4 S-palmitoyl cysteine lipidation sites follow: Cys-12, Cys-13, Cys-14, and Cys-15. GTP-binding positions include 31–38 (GIGSAGKT), 75–79 (DVGGD), and 134–137 (NNQN). Lys-239 participates in a covalent cross-link: Glycyl lysine isopeptide (Lys-Gly) (interchain with G-Cter in SUMO). The tract at residues 255–331 (RNQPPVQPPI…PVSPESNSVK (77 aa)) is disordered. The span at 259–271 (PVQPPIPPDPPSD) shows a compositional bias: pro residues. 2 stretches are compositionally biased toward polar residues: residues 287-303 (LASSTIPSDIIQSTPET) and 314-328 (RISQTSTKPVSPESN). Lys-331 is covalently cross-linked (Glycyl lysine isopeptide (Lys-Gly) (interchain with G-Cter in SUMO)). The tract at residues 366–369 (RVVP) is RVVP region.

This sequence belongs to the small GTPase superfamily. Arf family. In terms of assembly, monomer. In terms of processing, sumoylation regulates the targeting of membrane sensory receptors to the cilium. In terms of tissue distribution, specifically expressed in ciliated sensory neurons throughout development in both hermaphrodites.

The protein localises to the cell projection. The protein resides in the cilium membrane. In terms of biological role, cilium-specific protein required to control the microtubule-based, ciliary axoneme structure. Required for normal sensory cilium function. May act by maintaining the association between IFT subcomplexes A and B. This chain is ADP-ribosylation factor-like protein 13B (arl-13), found in Caenorhabditis elegans.